The chain runs to 337 residues: MDPRSEVILRQHDYLKGRVLLINAPNDALVSQLPTEIDASVWTWNYADYQGFLNAGATAHFSVEFPLQEFDQAIIFVPKSKELLNYILHVVMSHLKIDQSVFLVGEKKGGVERAAKQLQSFGKILKLDSARHCQLWHLKIEKTEKIKPLESWLKTYTVQVNEQELTICALPGVFSQTHLDVGTAVLLPYLNQVKSGRIADFGCGAGIISCYLAKANSSNIIHALDIDAFALQSTEMTFSRNGIGSDQLRLQPVTGIADAPTELDAIVSNPPFHQGIHTNYDASEGLCQNAKKHLKASGELWIVANRFLNYPILIEKHFGQCEIKTDLQGFKVLYACA.

It belongs to the methyltransferase superfamily. RsmC family. In terms of assembly, monomer.

Its subcellular location is the cytoplasm. It carries out the reaction guanosine(1207) in 16S rRNA + S-adenosyl-L-methionine = N(2)-methylguanosine(1207) in 16S rRNA + S-adenosyl-L-homocysteine + H(+). Functionally, specifically methylates the guanine in position 1207 of 16S rRNA in the 30S particle. This is Ribosomal RNA small subunit methyltransferase C from Acinetobacter baumannii (strain ACICU).